Here is an 88-residue protein sequence, read N- to C-terminus: Elongation factor 1-beta (88 aa).

It belongs to the EF-1-beta/EF-1-delta family.

Its function is as follows. Promotes the exchange of GDP for GTP in EF-1-alpha/GDP, thus allowing the regeneration of EF-1-alpha/GTP that could then be used to form the ternary complex EF-1-alpha/GTP/AAtRNA. The polypeptide is Elongation factor 1-beta (Halorubrum lacusprofundi (strain ATCC 49239 / DSM 5036 / JCM 8891 / ACAM 34)).